The chain runs to 172 residues: Shikimate kinase 2 (172 aa).

9-16 contributes to the ATP binding site; the sequence is GARAAGKT.

Belongs to the shikimate kinase family.

Its subcellular location is the cytoplasm. The enzyme catalyses shikimate + ATP = 3-phosphoshikimate + ADP + H(+). The protein operates within metabolic intermediate biosynthesis; chorismate biosynthesis; chorismate from D-erythrose 4-phosphate and phosphoenolpyruvate: step 5/7. The polypeptide is Shikimate kinase 2 (Syntrophotalea carbinolica (strain DSM 2380 / NBRC 103641 / GraBd1) (Pelobacter carbinolicus)).